The primary structure comprises 689 residues: Choline transporter-like 1 (689 aa).

The helical transmembrane segment at 23 to 43 (IFWLVVYILFWIALLVIAVFS) threads the bilayer. Asn-134 carries an N-linked (GlcNAc...) asparagine glycan. Helical transmembrane passes span 199–219 (FSDIYKTWPTVLLLVGLSLIF) and 233–255 (IISWLICIFVAVASIGITAVLWW). An N-linked (GlcNAc...) asparagine glycan is attached at Asn-279. Helical transmembrane passes span 283–303 (IYVLAILATCIMIILLVVIYY) and 333–353 (VLAFIALAVFLSFWMVVIVCL). N-linked (GlcNAc...) asparagine glycosylation is found at Asn-375 and Asn-389. The next 4 helical transmembrane spans lie at 412–432 (IYIIGLVWTSEFIFACQQLVI), 461–481 (LGSVAKGSFIITLFKIPRLIL), 562–582 (LVLFLGKLAVAALCGLISILM), and 591–611 (FYMAPVIIITLFSFFVAHIVL).

The protein belongs to the CTL (choline transporter-like) family.

It is found in the membrane. In Aedes aegypti (Yellowfever mosquito), this protein is Choline transporter-like 1.